Consider the following 335-residue polypeptide: MHTAYVPVPAPVRPPSAERWPLAAVAELFELPFLDLLHRAQQVHRQHFDANTVQLSSLLSIKTGGCPEDCAYCPQSAHYDTGVDADKLMPLDEVVRAARAAQANGAQRFCMGAAWRSPKPHHLEAVAEMIGAVKALGMETCVTLGMLRDGQAEQLKAAGLDYYNHNLDTAPEFYGKIISTRTYQDRLDTLQQVREAGINVCCGGIVGMGESRRDRAGLVAQLTNMEPYPESVPINNLVQVEGTPLAGAETLDPFEFIRTIAVARITMPLAKVRLSAGRETMSDSEQALCFMAGANSIFYGDVLLTTGNPQVEADRRLLQRLGMRAEGLPCAAGQA.

In terms of domain architecture, Radical SAM core spans 51 to 278; the sequence is NTVQLSSLLS…LAKVRLSAGR (228 aa). C66, C70, and C73 together coordinate [4Fe-4S] cluster. C110, C141, C201, and R273 together coordinate [2Fe-2S] cluster.

This sequence belongs to the radical SAM superfamily. Biotin synthase family. As to quaternary structure, homodimer. The cofactor is [4Fe-4S] cluster. It depends on [2Fe-2S] cluster as a cofactor.

The catalysed reaction is (4R,5S)-dethiobiotin + (sulfur carrier)-SH + 2 reduced [2Fe-2S]-[ferredoxin] + 2 S-adenosyl-L-methionine = (sulfur carrier)-H + biotin + 2 5'-deoxyadenosine + 2 L-methionine + 2 oxidized [2Fe-2S]-[ferredoxin]. The protein operates within cofactor biosynthesis; biotin biosynthesis; biotin from 7,8-diaminononanoate: step 2/2. Catalyzes the conversion of dethiobiotin (DTB) to biotin by the insertion of a sulfur atom into dethiobiotin via a radical-based mechanism. This chain is Biotin synthase, found in Bordetella pertussis (strain Tohama I / ATCC BAA-589 / NCTC 13251).